Here is a 90-residue protein sequence, read N- to C-terminus: Small ribosomal subunit protein uS15 (90 aa).

Belongs to the universal ribosomal protein uS15 family. As to quaternary structure, part of the 30S ribosomal subunit. Forms a bridge to the 50S subunit in the 70S ribosome, contacting the 23S rRNA.

One of the primary rRNA binding proteins, it binds directly to 16S rRNA where it helps nucleate assembly of the platform of the 30S subunit by binding and bridging several RNA helices of the 16S rRNA. In terms of biological role, forms an intersubunit bridge (bridge B4) with the 23S rRNA of the 50S subunit in the ribosome. This chain is Small ribosomal subunit protein uS15, found in Wolbachia sp. subsp. Brugia malayi (strain TRS).